The primary structure comprises 122 residues: MALPRCHRLRQRDRFPALYRGGRKLSTPSLLLRWLPQAEIESVNESRFAIVISLKVHKRAVRRNRLRRRLQAALLRLRDRLRPGFDGLLTVKPGLDLDTSTSQFLQELEDLLTRAEIIHGRQ.

The protein belongs to the RnpA family. Consists of a catalytic RNA component (M1 or rnpB) and a protein subunit.

It carries out the reaction Endonucleolytic cleavage of RNA, removing 5'-extranucleotides from tRNA precursor.. Its function is as follows. RNaseP catalyzes the removal of the 5'-leader sequence from pre-tRNA to produce the mature 5'-terminus. It can also cleave other RNA substrates such as 4.5S RNA. The protein component plays an auxiliary but essential role in vivo by binding to the 5'-leader sequence and broadening the substrate specificity of the ribozyme. This is Ribonuclease P protein component from Synechococcus elongatus (strain ATCC 33912 / PCC 7942 / FACHB-805) (Anacystis nidulans R2).